We begin with the raw amino-acid sequence, 113 residues long: uncharacterized protein (113 aa).

A mitochondrion-targeting transit peptide spans 1–14 (MATRNALRIVSRRF). Positions 41–79 (QKLARQGPGEQAAGSASEAKVAGATASASAESGPKVSED) are disordered. The span at 55–73 (SASEAKVAGATASASAESG) shows a compositional bias: low complexity.

The protein resides in the mitochondrion. This is an uncharacterized protein from Arabidopsis thaliana (Mouse-ear cress).